Reading from the N-terminus, the 158-residue chain is Ecotin-like protein 2 (158 aa).

It belongs to the protease inhibitor I11 (ecotin) family.

The chain is Ecotin-like protein 2 from Leishmania major.